Consider the following 350-residue polypeptide: Biotin synthase (350 aa).

A Radical SAM core domain is found at 42–269; that stretch reads NEVQVSTLCS…QSHVRLSAGR (228 aa). Positions 57, 61, and 64 each coordinate [4Fe-4S] cluster. [2Fe-2S] cluster-binding residues include Cys-101, Cys-132, Cys-192, and Arg-264.

Belongs to the radical SAM superfamily. Biotin synthase family. As to quaternary structure, homodimer. [4Fe-4S] cluster is required as a cofactor. [2Fe-2S] cluster serves as cofactor.

The enzyme catalyses (4R,5S)-dethiobiotin + (sulfur carrier)-SH + 2 reduced [2Fe-2S]-[ferredoxin] + 2 S-adenosyl-L-methionine = (sulfur carrier)-H + biotin + 2 5'-deoxyadenosine + 2 L-methionine + 2 oxidized [2Fe-2S]-[ferredoxin]. It functions in the pathway cofactor biosynthesis; biotin biosynthesis; biotin from 7,8-diaminononanoate: step 2/2. In terms of biological role, catalyzes the conversion of dethiobiotin (DTB) to biotin by the insertion of a sulfur atom into dethiobiotin via a radical-based mechanism. This is Biotin synthase from Saccharophagus degradans (strain 2-40 / ATCC 43961 / DSM 17024).